The following is a 354-amino-acid chain: Stimulator of interferon genes protein 3 (354 aa).

4 consecutive transmembrane segments (helical) span residues 20 to 40, 48 to 68, 101 to 121, and 132 to 152; these read VTFA…FALW, INFV…GELI, YGSC…YALL, and YGIF…IVGI. Asn-178, Tyr-183, Arg-250, Ile-251, Lys-253, Glu-272, Ser-275, and Asn-276 together coordinate 3',3'-cGAMP.

Belongs to the STING family.

The protein resides in the membrane. Its function is as follows. Facilitator of innate immune signaling that acts as a sensor of second messenger signals produced by cyclic GMP-AMP synthase-like receptors (cGLRs) and promotes the production of type I interferon. Innate immune response is triggered in response to nucleotides from viruses and bacteria delivered to the cytoplasm. Acts by binding cyclic dinucleotides: recognizes and binds cyclic 3'-3' linked cGAMP (3'-3'-cGAMP), cyclic di-AMP (3',3'-c-di-AMP) and cyclic di-GMP (3',3'-c-di-GMP) second messengers produced by cGLRs in response to nucleotides in the cytosol, such as double-stranded RNA (dsRNA). Upon binding to 3'-3'-cGAMP, 3',3'-c-di-AMP or 3',3'-c-di-GMP, oligomerizes and promotes the recruitment and subsequent activation of the transcription factor IRF3 to induce expression of type I interferon. The protein is Stimulator of interferon genes protein 3 of Stylophora pistillata (Smooth cauliflower coral).